A 426-amino-acid polypeptide reads, in one-letter code: Histidine--tRNA ligase (426 aa).

It belongs to the class-II aminoacyl-tRNA synthetase family. As to quaternary structure, homodimer.

It localises to the cytoplasm. It carries out the reaction tRNA(His) + L-histidine + ATP = L-histidyl-tRNA(His) + AMP + diphosphate + H(+). The sequence is that of Histidine--tRNA ligase from Hydrogenovibrio crunogenus (strain DSM 25203 / XCL-2) (Thiomicrospira crunogena).